The primary structure comprises 200 residues: ATP synthase subunit s, mitochondrial (200 aa).

The N-terminal 25 residues, 1–25, are a transit peptide targeting the mitochondrion; it reads MMLFGKVSQQLCGIKKLPWSCDSRY. The segment at 1-61 is N-terminal domain; that stretch reads MMLFGKVSQQ…SEWLLRCGAM (61 aa). A Mg(2+)-binding site is contributed by Gly-59. LRR repeat units lie at residues 62–87, 88–116, 117–141, and 142–173; these read VRYHGQERWQTDYNHLPTGPLDKYKI, QAIDATNSCIMSIGFDHMVGLQHVEKIRL, CKCHFIEDDCLLRLGQLENLQKSIL, and EMEIISCGNITDKGIIASRHLRNLKYLLLSDL. Residue Thr-93 coordinates Mg(2+).

The protein belongs to the ATP synthase subunit s family. In terms of assembly, homotetramer. Associates with ATP synthase.

It is found in the mitochondrion. The protein resides in the mitochondrion inner membrane. In terms of biological role, involved in regulation of mitochondrial membrane ATP synthase. Necessary for H(+) conduction of ATP synthase. Facilitates energy-driven catalysis of ATP synthesis by blocking a proton leak through an alternative proton exit pathway. The polypeptide is ATP synthase subunit s, mitochondrial (DMAC2L) (Macaca fascicularis (Crab-eating macaque)).